Here is a 152-residue protein sequence, read N- to C-terminus: Dynein light chain Tctex-type protein 2B (152 aa).

This sequence belongs to the dynein light chain Tctex-type family. In terms of assembly, light chain of the cytoplasmic dynein complex 2, a multisubunit complex composed at least of eleven different proteins. The cytoplasmic dynein 2 complex consists of two catalytic heavy chains (HCs) and a number of non-catalytic subunits presented by intermediate chains (ICs), light intermediate chains (LICs) and light chains (LCs). Among them, a heavy chain (DYNC2H1), two intermediate chains (DYNC2I2 and DYNC2I1), a light intermediate chain (DYNC2LI1), and a light chain (DYNLT2B) are unique to the dynein-2 complex, but a subset of the light chains are also shared by dynein-1 and dynein-2 complexes. The dimer DYNLT2B-DYNLT1/DYNLT3 interacts with DYNC2I1; this interaction is crucial for retrograde trafficking of ciliary proteins.

The protein localises to the dynein axonemal particle. Its function is as follows. Acts as one of several non-catalytic accessory components of the cytoplasmic dynein 2 complex (dynein-2 complex), a motor protein complex that drives the movement of cargos along microtubules within cilia and flagella in concert with the intraflagellar transport (IFT) system. Required for proper retrograde ciliary transport. This is Dynein light chain Tctex-type protein 2B (DYNLT2B) from Bos taurus (Bovine).